We begin with the raw amino-acid sequence, 549 residues long: Glucose-6-phosphate isomerase (549 aa).

An N6-acetyllysine mark is found at Lys80, Lys228, and Lys234. The active-site Proton donor is Glu355. Residues His386 and Lys514 contribute to the active site.

This sequence belongs to the GPI family.

It localises to the cytoplasm. It catalyses the reaction alpha-D-glucose 6-phosphate = beta-D-fructose 6-phosphate. Its pathway is carbohydrate biosynthesis; gluconeogenesis. It functions in the pathway carbohydrate degradation; glycolysis; D-glyceraldehyde 3-phosphate and glycerone phosphate from D-glucose: step 2/4. Its function is as follows. Catalyzes the reversible isomerization of glucose-6-phosphate to fructose-6-phosphate. This Escherichia fergusonii (strain ATCC 35469 / DSM 13698 / CCUG 18766 / IAM 14443 / JCM 21226 / LMG 7866 / NBRC 102419 / NCTC 12128 / CDC 0568-73) protein is Glucose-6-phosphate isomerase.